The primary structure comprises 495 residues: MKTQLLSLGVALTAISQGVIAEDALNWPFKPLVNADDLQNKIKLKDLMAGVQKLQDFAYAHPEKNRVFGGAGHKDTVDWIYNELKATGYYDVKMQPQVHLWSHAEAAVNANGKDLTASAMSYSPPADKITAELVLAKNMGCNATDYPEGTKGKIVLIERGVCSFGEKSAQAGDAKAIGAIVYNNVPGSLAGTLGGLDNRHAPTAGISQADGKNLASLVASGKVTVTMNVISKFENRTTWNVIAETKGGDHNNVIMLGSHSDSVDAGPGINDNGSGTIGIMTVAKALTNFKVNNAVRFGWWTAEEFGLLGSTFYVDSLDDRELHKVKLYLNFDMIGSPNFANQIYDGDGSAYNMTGPAGSAEIEYLFEKFFDDQGIPHQPTAFTGRSDYSAFIKRNVPAGGLFTGAEVVKTAEQAKLFGGEAGVAYDKNYHGKGDTVDNINKGAIYLNTRGIAYATAQYASSLRGFPTRPKTGKRDVSPRGQSMPGGGCGHHSVFM.

Residues 1–21 (MKTQLLSLGVALTAISQGVIA) form the signal peptide. In terms of domain architecture, PA spans 124 to 218 (PPADKITAEL…ADGKNLASLV (95 aa)). Asn-142 and Asn-235 each carry an N-linked (GlcNAc...) asparagine glycan. 2 residues coordinate Zn(2+): His-259 and Asp-271. Asn-272 carries N-linked (GlcNAc...) asparagine glycosylation. Glu-303 functions as the Proton acceptor in the catalytic mechanism. Glu-304 and Asp-332 together coordinate Zn(2+). Asn-352 carries N-linked (GlcNAc...) asparagine glycosylation. A Zn(2+)-binding site is contributed by His-430. Positions 464-495 (GFPTRPKTGKRDVSPRGQSMPGGGCGHHSVFM) are disordered.

This sequence belongs to the peptidase M28 family. M28A subfamily. As to quaternary structure, monomer. It depends on Zn(2+) as a cofactor.

It is found in the secreted. Functionally, extracellular aminopeptidase that releases a wide variety of amino acids from natural peptides and contributes to pathogenicity. In Arthroderma otae (strain ATCC MYA-4605 / CBS 113480) (Microsporum canis), this protein is Leucine aminopeptidase 2 (LAP2).